Reading from the N-terminus, the 291-residue chain is MNTLLFKRKGGNCGNESNIVSQGSPSSSNLPESPGTLDEKNLPRLPTPFARSLSTIPSYEQMKRTNKLPDYHLKIVVVGDGAVGKTCLLISYVQGTFPTDYIPTIFENYVTNIEGPNGQIIELALWDTAGQEEYSRLRPLSYTNADVLMVCYSVGSKTSLKNVEDLWFPEVKHFCPSTPIMLVGLKSDLYEADNLSDLVEPSSAESLAKRLGAFAHIQCSARLKENIDEVFETAIHTLLSDSLYAPREPTHTIKNPFKRNTTRSDIDSSTGDTSVSISGTKRLRKNKCIIM.

Residues Gly14–Pro31 are compositionally biased toward polar residues. The interval Gly14–Leu45 is disordered. Gly79 to Thr86 is a binding site for GTP. The Effector region motif lies at Tyr101–Tyr109. Residues Asp127 to Gln131 and Leu185 to Asp188 each bind GTP. The disordered stretch occupies residues Thr250 to Thr273. Residues Ser264, Ser268, and Ser276 each carry the phosphoserine modification. Cysteine methyl ester is present on Cys288. Residue Cys288 is the site of S-farnesyl cysteine attachment. Positions Ile289–Met291 are cleaved as a propeptide — removed in mature form.

It belongs to the small GTPase superfamily. Rho family. Interacts with BEM4.

The protein resides in the cell membrane. The catalysed reaction is GTP + H2O = GDP + phosphate + H(+). Its function is as follows. Plays an important role in cell growth. Required to keep the uninucleated state. May be involved in the organization of the cytoskeleton which affects microtubule functions. Most likely RHO3 and RHO4 of S.cerevisiae regulate partially overlapping but different pathways. This is GTP-binding protein RHO4 (RHO4) from Saccharomyces cerevisiae (strain ATCC 204508 / S288c) (Baker's yeast).